The sequence spans 255 residues: NAD kinase (255 aa).

Residue aspartate 44 is the Proton acceptor of the active site. NAD(+) is bound by residues 44-45 (DG), histidine 49, 114-115 (NE), aspartate 144, alanine 152, 155-160 (SAYNLS), and glutamine 216.

It belongs to the NAD kinase family. It depends on a divalent metal cation as a cofactor.

The protein localises to the cytoplasm. The catalysed reaction is NAD(+) + ATP = ADP + NADP(+) + H(+). In terms of biological role, involved in the regulation of the intracellular balance of NAD and NADP, and is a key enzyme in the biosynthesis of NADP. Catalyzes specifically the phosphorylation on 2'-hydroxyl of the adenosine moiety of NAD to yield NADP. The sequence is that of NAD kinase from Rickettsia typhi (strain ATCC VR-144 / Wilmington).